A 248-amino-acid polypeptide reads, in one-letter code: Ribosomal RNA small subunit methyltransferase G (248 aa).

The interval 1–23 is disordered; that stretch reads MFHVKHVGPVEPAAGDPEVPPVA. Residues Gly-93, Leu-98, 143–144, and Arg-161 contribute to the S-adenosyl-L-methionine site; that span reads AE. The interval 226 to 248 is disordered; sequence VVSARRAKPPHPKSARTGKAGTR. A compositionally biased stretch (basic residues) spans 230 to 248; sequence RRAKPPHPKSARTGKAGTR.

This sequence belongs to the methyltransferase superfamily. RNA methyltransferase RsmG family.

It localises to the cytoplasm. Functionally, specifically methylates the N7 position of guanine in position 518 of 16S rRNA. The sequence is that of Ribosomal RNA small subunit methyltransferase G from Mycolicibacterium paratuberculosis (strain ATCC BAA-968 / K-10) (Mycobacterium paratuberculosis).